An 898-amino-acid chain; its full sequence is Alanine--tRNA ligase (898 aa).

Residues His589, His593, Cys693, and His697 each contribute to the Zn(2+) site.

Belongs to the class-II aminoacyl-tRNA synthetase family. It depends on Zn(2+) as a cofactor.

Its subcellular location is the cytoplasm. The catalysed reaction is tRNA(Ala) + L-alanine + ATP = L-alanyl-tRNA(Ala) + AMP + diphosphate. Functionally, catalyzes the attachment of alanine to tRNA(Ala) in a two-step reaction: alanine is first activated by ATP to form Ala-AMP and then transferred to the acceptor end of tRNA(Ala). Also edits incorrectly charged Ser-tRNA(Ala) and Gly-tRNA(Ala) via its editing domain. This Methanothermobacter thermautotrophicus (strain ATCC 29096 / DSM 1053 / JCM 10044 / NBRC 100330 / Delta H) (Methanobacterium thermoautotrophicum) protein is Alanine--tRNA ligase.